The sequence spans 175 residues: RNA pyrophosphohydrolase (175 aa).

The region spanning 6-149 (GYRPNVGIVI…KRDVYRRVMK (144 aa)) is the Nudix hydrolase domain. The Nudix box motif lies at 38–59 (GGINAGETAEQAMYRELFEEVG).

The protein belongs to the Nudix hydrolase family. RppH subfamily. A divalent metal cation is required as a cofactor.

Functionally, accelerates the degradation of transcripts by removing pyrophosphate from the 5'-end of triphosphorylated RNA, leading to a more labile monophosphorylated state that can stimulate subsequent ribonuclease cleavage. The chain is RNA pyrophosphohydrolase from Sodalis glossinidius (strain morsitans).